A 178-amino-acid chain; its full sequence is Glucagon-1 (178 aa).

A signal peptide spans 1–21; sequence MFGIHSLAGVLLLVIVQRQLA. 3 propeptides span residues 83-87, 123-134, and 171-178; these read SGAPS, ESAEESRNGPMS, and SNKRQEDH.

This sequence belongs to the glucagon family.

The protein localises to the secreted. In terms of biological role, promotes hydrolysis of glycogen and lipids, and raises the blood sugar level. The sequence is that of Glucagon-1 (gcg1) from Oncorhynchus mykiss (Rainbow trout).